Reading from the N-terminus, the 547-residue chain is Solute carrier family 22 member 25 (547 aa).

The Cytoplasmic portion of the chain corresponds to 1-9; sequence MAFQDLLDQ. A helical membrane pass occupies residues 10-30; sequence VGGLGRFQILQMVFLIMFNVI. The Extracellular segment spans residues 31 to 145; the sequence is VYHQTQLENF…DLVCESQPLN (115 aa). 2 N-linked (GlcNAc...) asparagine glycosylation sites follow: asparagine 56 and asparagine 102. Residues 146 to 166 form a helical membrane-spanning segment; sequence SVAKFLFMAGMMVGGNLYGHL. Residues 167–177 lie on the Cytoplasmic side of the membrane; it reads SDRFGRKFVLR. A helical membrane pass occupies residues 178-198; it reads WSYLQLAIVGTCAAFAPTILV. The Extracellular segment spans residues 199–204; the sequence is YCSLRF. The chain crosses the membrane as a helical span at residues 205-225; it reads LAGAATFSIIVNTVLLIVEWI. The Cytoplasmic portion of the chain corresponds to 226–234; sequence THQFCAMAL. A helical transmembrane segment spans residues 235 to 255; it reads TLTLCAASIGHITLGSLAFVI. The Extracellular segment spans residues 256 to 259; that stretch reads RDQC. Residues 260-280 form a helical membrane-spanning segment; the sequence is ILQLVMSAPCFVFFLFSRWLA. Topologically, residues 281-349 are cytoplasmic; the sequence is ESARWLIINN…LLRIPNICKR (69 aa). Residues 350 to 370 traverse the membrane as a helical segment; it reads ICFLSFVRFASTIPFWGLTLH. Residues 371 to 377 are Extracellular-facing; that stretch reads LQHLGNN. A helical membrane pass occupies residues 378–398; that stretch reads VFLLQTLFGAVTLLANCVAPW. The Cytoplasmic segment spans residues 399–406; sequence ALNHMSRR. The chain crosses the membrane as a helical span at residues 407–427; sequence LSQMLLMFLLATCLLAIIFVP. Over 428–434 the chain is Extracellular; that stretch reads QEMQTLR. A helical membrane pass occupies residues 435–455; sequence VVLATLGVGAASLGITCSTAQ. Over 456–470 the chain is Cytoplasmic; that stretch reads ENELIPSIIRGRATG. The helical transmembrane segment at 471-491 threads the bilayer; it reads ITGNFANIGGALASLMMILSI. The Extracellular segment spans residues 492–494; that stretch reads YSR. A helical transmembrane segment spans residues 495-515; sequence PLPWIIYGVFAILSGLVVLLL. The Cytoplasmic portion of the chain corresponds to 516-547; the sequence is PETRNQPLLDSIQDVENEGVNSLAAPQRSSVL.

It belongs to the major facilitator (TC 2.A.1) superfamily. Organic cation transporter (TC 2.A.1.19) family. Expressed exclusively in liver in both embryo and adult.

The protein resides in the membrane. This is Solute carrier family 22 member 25 from Homo sapiens (Human).